The sequence spans 241 residues: Nopaline transport system permease protein NocM (241 aa).

One can recognise an ABC transmembrane type-1 domain in the interval 17 to 215 (VPTTLTLAFI…FITFVVSRLV (199 aa)). 5 consecutive transmembrane segments (helical) span residues 21 to 41 (LTLA…VALM), 52 to 72 (LAYG…MFLI), 95 to 115 (PWFC…SEII), 161 to 181 (VMLI…EVTG), and 191 to 211 (YSPV…TFVV).

This sequence belongs to the binding-protein-dependent transport system permease family. HisMQ subfamily.

It localises to the cell inner membrane. In terms of biological role, component of the nopaline active transport system probably consisting of four subunits: Q, M, P and T. This system is also capable of transporting octopine provided that catabolic functions are induced with nopaline. This Agrobacterium fabrum (strain C58 / ATCC 33970) (Agrobacterium tumefaciens (strain C58)) protein is Nopaline transport system permease protein NocM (nocM).